The sequence spans 72 residues: MAKEDTLEFPGVVKELLPNATFRVELENGHEIIAHTAGKMRKNRIRVLAGDRVQVEMTPYDLTKGRINYRFK.

Positions 1–72 constitute an S1-like domain; that stretch reads MAKEDTLEFP…TKGRINYRFK (72 aa).

Belongs to the IF-1 family. Component of the 30S ribosomal translation pre-initiation complex which assembles on the 30S ribosome in the order IF-2 and IF-3, IF-1 and N-formylmethionyl-tRNA(fMet); mRNA recruitment can occur at any time during PIC assembly.

It localises to the cytoplasm. Functionally, one of the essential components for the initiation of protein synthesis. Stabilizes the binding of IF-2 and IF-3 on the 30S subunit to which N-formylmethionyl-tRNA(fMet) subsequently binds. Helps modulate mRNA selection, yielding the 30S pre-initiation complex (PIC). Upon addition of the 50S ribosomal subunit IF-1, IF-2 and IF-3 are released leaving the mature 70S translation initiation complex. The polypeptide is Translation initiation factor IF-1 (Ruegeria sp. (strain TM1040) (Silicibacter sp.)).